The sequence spans 417 residues: MFANISIAEFDPELAQAITNEDARQEAHIELIASENYCSPAVMEAQGSKLTNKYAEGYPGKRYYGGCEYVDIIEQLAIDRAKELFGADYANVQPHAGSQANSAVYLALLNPGDTVLGMSLAHGGHLTHGAKVSFSGKTYNAIQYGLNPETGEIDYEEVERLALEHKPRMIVAGFSAYSQIVDWQRFRDIADKIGAYLFVDMAHVAGLVAAGVYPNPVQIADVTTTTTHKTLRGPRSGLILAKANEEIEKKLQSAVFPGNQGGPLVHAVAAKAICFKEAMAPEYKAYQQQVVKNAQAMAEVLIERGYDVVSGGTKNHLFLLSLIKQDITGKDADAWLGAAHITVNKNSVPNDPRSPFVTSGIRIGTPAVTTRGFGEAEVRDLASWIADILDSKGDEAVINTVKAKVEAVCAKFPVYAK.

(6S)-5,6,7,8-tetrahydrofolate is bound by residues Leu120 and 124–126 (GHL). Lys229 carries the N6-(pyridoxal phosphate)lysine modification. 354 to 356 (SPF) is a binding site for (6S)-5,6,7,8-tetrahydrofolate.

The protein belongs to the SHMT family. As to quaternary structure, homodimer. The cofactor is pyridoxal 5'-phosphate.

It is found in the cytoplasm. The catalysed reaction is (6R)-5,10-methylene-5,6,7,8-tetrahydrofolate + glycine + H2O = (6S)-5,6,7,8-tetrahydrofolate + L-serine. It functions in the pathway one-carbon metabolism; tetrahydrofolate interconversion. It participates in amino-acid biosynthesis; glycine biosynthesis; glycine from L-serine: step 1/1. In terms of biological role, catalyzes the reversible interconversion of serine and glycine with tetrahydrofolate (THF) serving as the one-carbon carrier. This reaction serves as the major source of one-carbon groups required for the biosynthesis of purines, thymidylate, methionine, and other important biomolecules. Also exhibits THF-independent aldolase activity toward beta-hydroxyamino acids, producing glycine and aldehydes, via a retro-aldol mechanism. This chain is Serine hydroxymethyltransferase, found in Acinetobacter radioresistens.